The primary structure comprises 309 residues: Foldase protein PrsA (309 aa).

Positions 1–22 are cleaved as a signal peptide; the sequence is MKTRSKLAAGFLTLMSVATLAA. Residue cysteine 23 is the site of N-palmitoyl cysteine attachment. Cysteine 23 carries S-diacylglycerol cysteine lipidation. Positions 146-241 constitute a PpiC domain; sequence TPETSVQVIK…TSYYIIKVTD (96 aa).

This sequence belongs to the PrsA family.

It is found in the cell membrane. The catalysed reaction is [protein]-peptidylproline (omega=180) = [protein]-peptidylproline (omega=0). Plays a major role in protein secretion by helping the post-translocational extracellular folding of several secreted proteins. This Streptococcus agalactiae serotype III (strain NEM316) protein is Foldase protein PrsA.